We begin with the raw amino-acid sequence, 430 residues long: Asparagine--tRNA ligase (430 aa).

Belongs to the class-II aminoacyl-tRNA synthetase family. Homodimer.

It localises to the cytoplasm. It catalyses the reaction tRNA(Asn) + L-asparagine + ATP = L-asparaginyl-tRNA(Asn) + AMP + diphosphate + H(+). This is Asparagine--tRNA ligase from Staphylococcus aureus (strain JH1).